We begin with the raw amino-acid sequence, 317 residues long: Mitochondrial thiamine pyrophosphate carrier 1 (317 aa).

Solcar repeat units follow at residues 12–110, 120–206, and 214–309; these read GTRR…TTQV, PPAL…LRPV, and PFGS…SLKL. 6 helical membrane-spanning segments follow: residues 17 to 35, 91 to 107, 126 to 146, 181 to 198, 220 to 240, and 284 to 301; these read VVLS…VAPL, LMYV…YRTT, FVSG…LDLL, GCSA…LFFA, AAAG…LDLV, and GLTV…ITMW.

This sequence belongs to the mitochondrial carrier (TC 2.A.29) family.

The protein resides in the mitochondrion inner membrane. In terms of biological role, mitochondrial transporter that mediates uptake of thiamine pyrophosphate (ThPP) into mitochondria. The chain is Mitochondrial thiamine pyrophosphate carrier 1 (tpc1) from Neosartorya fischeri (strain ATCC 1020 / DSM 3700 / CBS 544.65 / FGSC A1164 / JCM 1740 / NRRL 181 / WB 181) (Aspergillus fischerianus).